The following is a 161-amino-acid chain: Phosphopantetheine adenylyltransferase (161 aa).

T10 contacts substrate. ATP is bound by residues 10 to 11 (TF) and H18. 3 residues coordinate substrate: K42, M74, and R88. ATP is bound by residues 89 to 91 (GLR), E99, and 124 to 130 (WSFISSS).

It belongs to the bacterial CoaD family. As to quaternary structure, homohexamer. The cofactor is Mg(2+).

Its subcellular location is the cytoplasm. It carries out the reaction (R)-4'-phosphopantetheine + ATP + H(+) = 3'-dephospho-CoA + diphosphate. Its pathway is cofactor biosynthesis; coenzyme A biosynthesis; CoA from (R)-pantothenate: step 4/5. Its function is as follows. Reversibly transfers an adenylyl group from ATP to 4'-phosphopantetheine, yielding dephospho-CoA (dPCoA) and pyrophosphate. This chain is Phosphopantetheine adenylyltransferase, found in Serratia proteamaculans (strain 568).